Reading from the N-terminus, the 317-residue chain is Glutathione synthetase (317 aa).

The 187-residue stretch at glutamate 124–glutamate 310 folds into the ATP-grasp domain. Phenylalanine 150–glycine 207 serves as a coordination point for ATP. Mg(2+) is bound by residues glutamate 281 and asparagine 283.

It belongs to the prokaryotic GSH synthase family. The cofactor is Mg(2+). It depends on Mn(2+) as a cofactor.

It carries out the reaction gamma-L-glutamyl-L-cysteine + glycine + ATP = glutathione + ADP + phosphate + H(+). It participates in sulfur metabolism; glutathione biosynthesis; glutathione from L-cysteine and L-glutamate: step 2/2. This chain is Glutathione synthetase, found in Vibrio vulnificus (strain CMCP6).